The sequence spans 285 residues: Acetylglutamate kinase (285 aa).

Substrate-binding positions include 64 to 65, Arg86, and Asn180; that span reads GG.

It belongs to the acetylglutamate kinase family. ArgB subfamily.

It is found in the plastid. Its subcellular location is the chloroplast. It carries out the reaction N-acetyl-L-glutamate + ATP = N-acetyl-L-glutamyl 5-phosphate + ADP. Its pathway is amino-acid biosynthesis; L-arginine biosynthesis; N(2)-acetyl-L-ornithine from L-glutamate: step 2/4. Catalyzes the ATP-dependent phosphorylation of N-acetyl-L-glutamate. The polypeptide is Acetylglutamate kinase (Gracilaria tenuistipitata var. liui (Red alga)).